A 146-amino-acid polypeptide reads, in one-letter code: UPF0260 protein Sbal_1871 (146 aa).

Belongs to the UPF0260 family.

The chain is UPF0260 protein Sbal_1871 from Shewanella baltica (strain OS155 / ATCC BAA-1091).